The primary structure comprises 547 residues: MFS-type transporter ungB (547 aa).

14 helical membrane-spanning segments follow: residues 14–34 (LLVTISLCLTLFCVSLDETVL), 50–70 (DVGWYGSSYLFVFTATQMAWG), 80–100 (WVFLTGVTVFEVGSLVCGVSP), 111–131 (IAGLGAGSINAGAVLIISNTI), 138–158 (IYLGCLGVVHGVVSVLGPVIG), 169–189 (WCFFLNLPIGAITVLGIVFCL), 210–230 (LLGSAFFIPGILMLLLALEWG), 238–258 (SWRVILLFVLSAVALAVFAVV), 279–299 (LGLIGYIVGNSGGLFVFVYYL), 316–336 (LAILPTQLGMVAASLAGGILV), 343–363 (TPFLIVSSLLAVAGAGLLSSL), 366–386 (ASGLGSILGYQVVLSVGIGLG), 392–412 (VVPSVVCAPGDVVMAIATLCF), and 475–495 (AVSETFYVGVAMCALSLLGSA). The interval 503–547 (PGHKEATEKVEGEGQGQGQQQEQDQGQGWGEVGESHALAHPTADK) is disordered. A compositionally biased stretch (basic and acidic residues) spans 504–514 (GHKEATEKVEG).

This sequence belongs to the major facilitator superfamily. TCR/Tet family.

The protein localises to the membrane. MFS-type transporter; part of the gene cluster that mediates the biosynthesis of the unguisins, gamma-aminobutyric acid (GABA)-containing fungal cyclic heptapeptides with the amino acid sequence cyclo-(D-Ala1-D-Val2-L-Phe3-D-Val4-D-Ala5-D-Trp6-GABA7) for unguisin A and cyclo-(D-Ala1-D-Val2-L-Leu3-D-Val4-D-Ala5-D-Trp6-GABA7) for unguisin B. May be involved in the secretion of unguisins. This chain is MFS-type transporter ungB, found in Aspergillus violaceofuscus (strain CBS 115571).